The chain runs to 156 residues: 6,7-dimethyl-8-ribityllumazine synthase (156 aa).

5-amino-6-(D-ribitylamino)uracil is bound by residues F23, 57 to 59 (AFE), and 81 to 83 (AVI). 86 to 87 (ST) provides a ligand contact to (2S)-2-hydroxy-3-oxobutyl phosphate. The active-site Proton donor is H89. F114 lines the 5-amino-6-(D-ribitylamino)uracil pocket. R128 contacts (2S)-2-hydroxy-3-oxobutyl phosphate.

It belongs to the DMRL synthase family.

It carries out the reaction (2S)-2-hydroxy-3-oxobutyl phosphate + 5-amino-6-(D-ribitylamino)uracil = 6,7-dimethyl-8-(1-D-ribityl)lumazine + phosphate + 2 H2O + H(+). Its pathway is cofactor biosynthesis; riboflavin biosynthesis; riboflavin from 2-hydroxy-3-oxobutyl phosphate and 5-amino-6-(D-ribitylamino)uracil: step 1/2. In terms of biological role, catalyzes the formation of 6,7-dimethyl-8-ribityllumazine by condensation of 5-amino-6-(D-ribitylamino)uracil with 3,4-dihydroxy-2-butanone 4-phosphate. This is the penultimate step in the biosynthesis of riboflavin. The chain is 6,7-dimethyl-8-ribityllumazine synthase from Campylobacter curvus (strain 525.92).